The following is a 471-amino-acid chain: Alpha-galactosidase 1 (471 aa).

The N-terminal stretch at 1–18 (MFAFYFLTACISLKGVFG) is a signal peptide. The cysteines at positions 42 and 74 are disulfide-linked. D72 and D73 together coordinate substrate. N105 carries an N-linked (GlcNAc...) asparagine glycan. An intrachain disulfide couples C121 to C151. Substrate is bound at residue K147. Catalysis depends on D149, which acts as the Nucleophile. N-linked (GlcNAc...) asparagine glycosylation is present at N175. Residue R205 participates in substrate binding. The Proton donor role is filled by D209. 2 disulfide bridges follow: C221–C237 and C223–C230. Q251 is a binding site for substrate. N-linked (GlcNAc...) asparagine glycans are attached at residues N270, N370, N403, N413, N422, N435, and N454.

This sequence belongs to the glycosyl hydrolase 27 family. Homotetramer.

The protein resides in the secreted. The catalysed reaction is Hydrolysis of terminal, non-reducing alpha-D-galactose residues in alpha-D-galactosides, including galactose oligosaccharides, galactomannans and galactolipids.. The protein is Alpha-galactosidase 1 (MEL1) of Saccharomyces cerevisiae (Baker's yeast).